A 423-amino-acid chain; its full sequence is Glutamate-1-semialdehyde 2,1-aminomutase (423 aa).

Lys259 is subject to N6-(pyridoxal phosphate)lysine.

The protein belongs to the class-III pyridoxal-phosphate-dependent aminotransferase family. HemL subfamily. As to quaternary structure, homodimer. It depends on pyridoxal 5'-phosphate as a cofactor.

Its subcellular location is the cytoplasm. The enzyme catalyses (S)-4-amino-5-oxopentanoate = 5-aminolevulinate. It functions in the pathway porphyrin-containing compound metabolism; protoporphyrin-IX biosynthesis; 5-aminolevulinate from L-glutamyl-tRNA(Glu): step 2/2. The sequence is that of Glutamate-1-semialdehyde 2,1-aminomutase from Thermosipho melanesiensis (strain DSM 12029 / CIP 104789 / BI429).